The chain runs to 462 residues: Cytochrome P450 20A1 (462 aa).

The helical transmembrane segment at 4 to 24 (FAIFAVTFLLALVGAVLYLYP) threads the bilayer. Residue cysteine 409 participates in heme binding.

This sequence belongs to the cytochrome P450 family. It depends on heme as a cofactor.

It localises to the membrane. In Rattus norvegicus (Rat), this protein is Cytochrome P450 20A1 (Cyp20a1).